The primary structure comprises 424 residues: Enolase (424 aa).

Glutamine 162 serves as a coordination point for (2R)-2-phosphoglycerate. The Proton donor role is filled by glutamate 204. Positions 241, 284, and 311 each coordinate Mg(2+). 4 residues coordinate (2R)-2-phosphoglycerate: lysine 336, arginine 365, serine 366, and lysine 387. Lysine 336 (proton acceptor) is an active-site residue.

It belongs to the enolase family. Mg(2+) serves as cofactor.

The protein localises to the cytoplasm. The protein resides in the secreted. It is found in the cell surface. It catalyses the reaction (2R)-2-phosphoglycerate = phosphoenolpyruvate + H2O. It functions in the pathway carbohydrate degradation; glycolysis; pyruvate from D-glyceraldehyde 3-phosphate: step 4/5. Its function is as follows. Catalyzes the reversible conversion of 2-phosphoglycerate (2-PG) into phosphoenolpyruvate (PEP). It is essential for the degradation of carbohydrates via glycolysis. In Rhizobium meliloti (strain 1021) (Ensifer meliloti), this protein is Enolase.